A 387-amino-acid polypeptide reads, in one-letter code: S-adenosylmethionine synthase (387 aa).

Residue histidine 15 coordinates ATP. Position 17 (aspartate 17) interacts with Mg(2+). A K(+)-binding site is contributed by glutamate 43. The L-methionine site is built by glutamate 56 and glutamine 99. Residues 99–109 (QSPDIAQGVNA) form a flexible loop region. Residues 166–168 (DAK), 232–233 (RF), aspartate 241, 247–248 (RK), alanine 264, and lysine 268 each bind ATP. Aspartate 241 lines the L-methionine pocket. Residue lysine 272 coordinates L-methionine.

The protein belongs to the AdoMet synthase family. As to quaternary structure, homotetramer; dimer of dimers. It depends on Mg(2+) as a cofactor. The cofactor is K(+).

It localises to the cytoplasm. The enzyme catalyses L-methionine + ATP + H2O = S-adenosyl-L-methionine + phosphate + diphosphate. It functions in the pathway amino-acid biosynthesis; S-adenosyl-L-methionine biosynthesis; S-adenosyl-L-methionine from L-methionine: step 1/1. In terms of biological role, catalyzes the formation of S-adenosylmethionine (AdoMet) from methionine and ATP. The overall synthetic reaction is composed of two sequential steps, AdoMet formation and the subsequent tripolyphosphate hydrolysis which occurs prior to release of AdoMet from the enzyme. In Dechloromonas aromatica (strain RCB), this protein is S-adenosylmethionine synthase.